The following is a 479-amino-acid chain: MDETSPLVSPERAQPPEYTFPSGSGAHFPQVPGGAVRVAAAAGSGPSPPCSPGHDRERQPLLDRARGAAAQGQTHTVAVQAQALAAQAAVAAHAVQTHRERNDFPEDPEFEVVVRQAEVAIECSIYPERIYQGSSGSYFVKDSQGRIVAVFKPKNEEPYGHLNPKWTKWLQKLCCPCCFGRDCLVLNQGYLSEAGASLVDQKLELNIVPRTKVVYLASETFNYSAIDRVKSRGKRLALEKVPKVGQRFNRIGLPPKVGSFQLFVEGYKDADYWLRRFEAEPLPENTNRQLLLQFERLVVLDYIIRNTDRGNDNWLIKYDCPMDNSSCRDTDWVMVREPVIKVAAIDNGLAFPLKHPDSWRAYPFYWAWLPQAKVPFSQEIKDLILPKISDPNFIKDLEEDLYELFKRDPGFDRGQFHKQIAVMRGQILNLTQALKDNKSPLHLVQMPPVIVETARSHQRSASESYTQSFQSRKPFFSWW.

Met-1 carries the post-translational modification N-acetylmethionine. Residues 1–58 are disordered; it reads MDETSPLVSPERAQPPEYTFPSGSGAHFPQVPGGAVRVAAAAGSGPSPPCSPGHDRER. 5 positions are modified to phosphoserine: Ser-5, Ser-9, Ser-44, Ser-47, and Ser-51. Residues 31–45 are compositionally biased toward low complexity; it reads VPGGAVRVAAAAGSG. The PI3K/PI4K catalytic domain occupies 124-453; that stretch reads SIYPERIYQG…VQMPPVIVET (330 aa). The interval 130–136 is G-loop; sequence IYQGSSG. ATP is bound by residues 131-137 and Lys-152; that span reads YQGSSGS. The important for substrate binding stretch occupies residues 157–159; sequence EPY. The segment at 165 to 178 is important for interaction with membranes; that stretch reads KWTKWLQKLCCPCC. Residues Cys-174, Cys-175, Cys-177, and Cys-178 are each lipidated (S-palmitoyl cysteine). 261–264 serves as a coordination point for ATP; that stretch reads QLFV. The interval 268 to 276 is important for interaction with membranes; the sequence is KDADYWLRR. The segment at 305 to 313 is catalytic loop; it reads RNTDRGNDN. Residues 344–364 are activation loop; it reads AIDNGLAFPLKHPDSWRAYPF. Residue Asp-346 coordinates ATP. The segment at 359 to 368 is important for interaction with membranes; the sequence is WRAYPFYWAW. Position 462 is a phosphoserine (Ser-462).

This sequence belongs to the PI3/PI4-kinase family. Type II PI4K subfamily. As to quaternary structure, associates with the BLOC-1 and the AP-3 complexes; the BLOC-1 complex is required for optimal binding of PI4K2A to the AP-3 complex. Interacts with BLOC1S5 and DTNBP1. Interacts with ITCH. Interacts with FOS; this interaction may enhance phosphatidylinositol phosphorylation activity. Interacts with ATG9A. Palmitoylated by ZDHHC3 and ZDHHC7 in the CCPCC motif. Palmitoylation is cholesterol-dependent, and required for TGN localization. In terms of processing, ubiquitinated by ITCH; this does not lead to proteasomal degradation. As to expression, detected in brain (at protein level).

It is found in the golgi apparatus. It localises to the trans-Golgi network membrane. The protein localises to the membrane raft. Its subcellular location is the endosome. The protein resides in the endosome membrane. It is found in the cytoplasmic vesicle. It localises to the cell projection. The protein localises to the dendrite. Its subcellular location is the presynaptic cell membrane. The protein resides in the synapse. It is found in the synaptosome. It localises to the mitochondrion. The protein localises to the membrane. Its subcellular location is the cell membrane. The protein resides in the perikaryon. It is found in the neuron projection. The enzyme catalyses a 1,2-diacyl-sn-glycero-3-phospho-(1D-myo-inositol) + ATP = a 1,2-diacyl-sn-glycero-3-phospho-(1D-myo-inositol 4-phosphate) + ADP + H(+). In terms of biological role, membrane-bound phosphatidylinositol-4 kinase (PI4-kinase) that catalyzes the phosphorylation of phosphatidylinositol (PI) to phosphatidylinositol 4-phosphate (PI4P), a lipid that plays important roles in endocytosis, Golgi function, protein sorting and membrane trafficking and is required for prolonged survival of neurons. Besides, phosphorylation of phosphatidylinositol (PI) to phosphatidylinositol 4-phosphate (PI4P) is the first committed step in the generation of phosphatidylinositol 4,5-bisphosphate (PIP2), a precursor of the second messenger inositol 1,4,5-trisphosphate (InsP3). This chain is Phosphatidylinositol 4-kinase type 2-alpha (Pi4k2a), found in Mus musculus (Mouse).